The chain runs to 398 residues: Cation channel sperm-associated protein 3 (398 aa).

Over 1 to 48 (MSQHRHQRHSRVISSSPVDTTSVGFCPTFKKFKRNDDECRAFVKRVIM) the chain is Cytoplasmic. Residues 49-71 (SRFFKIIMISTVTSNAFFMALWT) traverse the membrane as a helical segment. Residues 72-80 (SYDIRYRLF) are Extracellular-facing. The helical transmembrane segment at 81-107 (RLLEFSEIFFVSICTSELSMKVYVDPI) threads the bilayer. Asparagine 108 is a topological domain (cytoplasmic). The helical transmembrane segment at 109–131 (YWKNGYNLLDVIIIIVMFLPYAL) threads the bilayer. The Extracellular segment spans residues 132 to 143 (RQLMGKQFTYLY). The chain crosses the membrane as a helical span at residues 144-160 (IADGMQSLRILKLIGYS). Residues 161 to 168 (QGIRTLIT) lie on the Cytoplasmic side of the membrane. A helical membrane pass occupies residues 169–195 (AVGQTVYTVASVLLLLFLLMYIFAILG). Residues 196 to 216 (FCLFGSPDNGDHDNWGNLAAA) are Extracellular-facing. The helical; Pore-forming intramembrane region spans 217–236 (FFTLFSLATVDGWTDLQKQL). At 237–242 (DNREFA) the chain is on the extracellular side. The helical transmembrane segment at 243–268 (LSRAFTIIFILLASFIFLNMFVGVMI) threads the bilayer. Topologically, residues 269 to 398 (MHTEDSIRKF…PQSLEKVDEK (130 aa)) are cytoplasmic.

The protein belongs to the cation channel sperm-associated (TC 1.A.1.19) family. Component of the CatSper complex or CatSpermasome composed of the core pore-forming members CATSPER1, CATSPER2, CATSPER3 and CATSPER4 as well as auxiliary members CATSPERB, CATSPERG, CATSPERD, CATSPERE, CATSPERZ, C2CD6/CATSPERT, TMEM249, TMEM262 and EFCAB9. HSPA1 may be an additional auxiliary complex member. The core complex members CATSPER1, CATSPER2, CATSPER3 and CATSPER4 form a heterotetrameric channel. The auxiliary CATSPERB, CATSPERG, CATSPERD and CATSPERE subunits form a pavilion-like structure over the pore which stabilizes the complex through interactions with CATSPER4, CATSPER3, CATSPER1 and CATSPER2 respectively. TMEM262/CATSPERH interacts with CATSPERB, further stabilizing the complex. C2CD6/CATSPERT interacts at least with CATSPERD and is required for targeting the CatSper complex in the flagellar membrane. Testis-specific.

It localises to the cell projection. The protein resides in the cilium. Its subcellular location is the flagellum membrane. The enzyme catalyses Ca(2+)(in) = Ca(2+)(out). With respect to regulation, the CatSper calcium channel is indirectly activated by extracellular progesterone and prostaglandins following the sequence: progesterone &gt; PGF1-alpha = PGE1 &gt; PGA1 &gt; PGE2 &gt;&gt; PGD2. The CatSper calcium channel is directly inhibited by endocannabinoid 2-arachidonoylglycerol (2AG). Indirect activation by progesterone takes place via the following mechanism: progesterone binds and activates the acylglycerol lipase ABHD2, which in turn mediates hydrolysis of 2AG inhibitor, relieving inhibition of the CatSper channel. The primary effect of progesterone activation is to shift voltage dependence towards more physiological, negative membrane potentials; it is not mediated by metabotropic receptors and second messengers. Sperm capacitation enhances the effect of progesterone by providing additional negative shift. Also activated by the elevation of intracellular pH. Functionally, pore-forming subunit of the CatSper complex, a sperm-specific voltage-gated calcium channel that plays a central role in calcium-dependent physiological responses essential for successful fertilization, such as sperm hyperactivation, acrosome reaction and chemotaxis towards the oocyte. The sequence is that of Cation channel sperm-associated protein 3 (CATSPER3) from Homo sapiens (Human).